Here is a 160-residue protein sequence, read N- to C-terminus: Cyanate hydratase (160 aa).

Active-site residues include Arg-100, Glu-103, and Ser-126.

It belongs to the cyanase family.

It carries out the reaction cyanate + hydrogencarbonate + 3 H(+) = NH4(+) + 2 CO2. Functionally, catalyzes the reaction of cyanate with bicarbonate to produce ammonia and carbon dioxide. This chain is Cyanate hydratase, found in Emericella nidulans (strain FGSC A4 / ATCC 38163 / CBS 112.46 / NRRL 194 / M139) (Aspergillus nidulans).